We begin with the raw amino-acid sequence, 671 residues long: UvrABC system protein B (671 aa).

A Helicase ATP-binding domain is found at 31-189 (KGFEEGKKEQ…QLVDIQFDRN (159 aa)). 44–51 (GATGTGKT) contacts ATP. Residues 97–120 (YYDYYQPEAYVPSTDTYIEKDSAI) carry the Beta-hairpin motif. The Helicase C-terminal domain maps to 437-599 (QIDDLVGEIN…ITPKTIIKPI (163 aa)). Residues 634–669 (KELVANLRSQMQAAAKKLDFEQAASLRDTILELQAD) form the UVR domain.

Belongs to the UvrB family. As to quaternary structure, forms a heterotetramer with UvrA during the search for lesions. Interacts with UvrC in an incision complex.

The protein localises to the cytoplasm. The UvrABC repair system catalyzes the recognition and processing of DNA lesions. A damage recognition complex composed of 2 UvrA and 2 UvrB subunits scans DNA for abnormalities. Upon binding of the UvrA(2)B(2) complex to a putative damaged site, the DNA wraps around one UvrB monomer. DNA wrap is dependent on ATP binding by UvrB and probably causes local melting of the DNA helix, facilitating insertion of UvrB beta-hairpin between the DNA strands. Then UvrB probes one DNA strand for the presence of a lesion. If a lesion is found the UvrA subunits dissociate and the UvrB-DNA preincision complex is formed. This complex is subsequently bound by UvrC and the second UvrB is released. If no lesion is found, the DNA wraps around the other UvrB subunit that will check the other stand for damage. The sequence is that of UvrABC system protein B from Lacticaseibacillus casei (strain BL23) (Lactobacillus casei).